The chain runs to 237 residues: Ribosomal RNA small subunit methyltransferase G (237 aa).

Residues Gly78, Phe83, 129-130, and Arg148 contribute to the S-adenosyl-L-methionine site; that span reads AE.

Belongs to the methyltransferase superfamily. RNA methyltransferase RsmG family.

Its subcellular location is the cytoplasm. Functionally, specifically methylates the N7 position of a guanine in 16S rRNA. This is Ribosomal RNA small subunit methyltransferase G from Streptococcus pyogenes serotype M6 (strain ATCC BAA-946 / MGAS10394).